The sequence spans 342 residues: Gibberellin cluster GA4 desaturase (342 aa).

The interval P127–A183 is disordered.

This sequence belongs to the asaB hydroxylase/desaturase family.

Its pathway is plant hormone biosynthesis; gibberellin biosynthesis. In terms of biological role, GA4 desaturase; part of the gene cluster that mediates the biosynthesis of gibberellins (GAs), diterpenoids that may provide a selective advantage during infection of the preferred host plant, rice. Gibberellins (GAs) are diterpenoids and are synthesized via the mevalonate pathway. Biosynthesis of the major metabolite GA3 (gibberellic acid) from geranylgeranyl diphosphate (GGPP) requires 13 steps. The GGPP produced by the geranylgeranyl diphosphate synthase GGS2 is converted to ent-kaurene via ent-copalyldiphosphate in a two-step cyclization reaction performed by the bifunctional ent-copalyl diphosphate synthase/ent-kaurene synthase enzyme (CPS/KS). Ent-Kaurene is metabolized to GAs by a series of oxidation reactions catalyzed by cytochrome P450 monooxygenases. Cytochrome P450 monooxygenase P450-4 is an ent-kaurene oxidase that catalyzes the three oxidation steps between ent-kaurene and ent-kaurenoic acid. The highly multifunctional cytochrome P450 monooxygenase P450-1 then catalyzes four steps involving oxidation at two carbon atoms, in the main pathway from ent-kaurenoic acid to GA14 via GA12-aldehyde as well as producing kaurenolides and fujenoic acids as by-products. The cytochrome P450 monooxygenase P450-2 then converts GA14 to GA4 by removal of C-20. GA4 is further converted to GA7 by the GA4 desaturase DES via 1,2-desaturation before cytochrome P450 monooxygenase P450-3, a 13-hydroxylase, hydroxylates GA7 to GA3, the final product of the GA-biosynthetic pathway. The chain is Gibberellin cluster GA4 desaturase from Gibberella fujikuroi (strain CBS 195.34 / IMI 58289 / NRRL A-6831) (Bakanae and foot rot disease fungus).